The following is a 161-amino-acid chain: Dermonecrotic toxin LarSicTox-alphaI-1 (161 aa).

It belongs to the arthropod phospholipase D family. Class II subfamily. Mg(2+) serves as cofactor. Contains 2 disulfide bonds. As to expression, expressed by the venom gland.

Its subcellular location is the secreted. The catalysed reaction is an N-(acyl)-sphingosylphosphocholine = an N-(acyl)-sphingosyl-1,3-cyclic phosphate + choline. The enzyme catalyses an N-(acyl)-sphingosylphosphoethanolamine = an N-(acyl)-sphingosyl-1,3-cyclic phosphate + ethanolamine. It catalyses the reaction a 1-acyl-sn-glycero-3-phosphocholine = a 1-acyl-sn-glycero-2,3-cyclic phosphate + choline. It carries out the reaction a 1-acyl-sn-glycero-3-phosphoethanolamine = a 1-acyl-sn-glycero-2,3-cyclic phosphate + ethanolamine. Dermonecrotic toxins cleave the phosphodiester linkage between the phosphate and headgroup of certain phospholipids (sphingolipid and lysolipid substrates), forming an alcohol (often choline) and a cyclic phosphate. This toxin acts on sphingomyelin (SM). It may also act on ceramide phosphoethanolamine (CPE), lysophosphatidylcholine (LPC) and lysophosphatidylethanolamine (LPE), but not on lysophosphatidylserine (LPS), and lysophosphatidylglycerol (LPG). It acts by transphosphatidylation, releasing exclusively cyclic phosphate products as second products. Induces dermonecrosis, hemolysis, increased vascular permeability, edema, inflammatory response, and platelet aggregation. The sequence is that of Dermonecrotic toxin LarSicTox-alphaI-1 from Loxosceles arizonica (Arizona brown spider).